A 1039-amino-acid polypeptide reads, in one-letter code: Isoleucine--tRNA ligase (1039 aa).

The short motif at P46–T56 is the 'HIGH' region element. The short motif at K600 to S604 is the 'KMSKS' region element. K603 provides a ligand contact to ATP.

Belongs to the class-I aminoacyl-tRNA synthetase family. IleS type 2 subfamily. Monomer. Requires Zn(2+) as cofactor.

It localises to the cytoplasm. It carries out the reaction tRNA(Ile) + L-isoleucine + ATP = L-isoleucyl-tRNA(Ile) + AMP + diphosphate. In terms of biological role, catalyzes the attachment of isoleucine to tRNA(Ile). As IleRS can inadvertently accommodate and process structurally similar amino acids such as valine, to avoid such errors it has two additional distinct tRNA(Ile)-dependent editing activities. One activity is designated as 'pretransfer' editing and involves the hydrolysis of activated Val-AMP. The other activity is designated 'posttransfer' editing and involves deacylation of mischarged Val-tRNA(Ile). This Methanocaldococcus jannaschii (strain ATCC 43067 / DSM 2661 / JAL-1 / JCM 10045 / NBRC 100440) (Methanococcus jannaschii) protein is Isoleucine--tRNA ligase.